Reading from the N-terminus, the 479-residue chain is UDP-N-acetylmuramoyl-L-alanyl-D-glutamate--2,6-diaminopimelate ligase (479 aa).

Residue Ser21 coordinates UDP-N-acetyl-alpha-D-muramoyl-L-alanyl-D-glutamate. 98–104 is a binding site for ATP; sequence GTNGKSS. Residues 144 to 145, Ser171, Gln177, and Arg179 each bind UDP-N-acetyl-alpha-D-muramoyl-L-alanyl-D-glutamate; that span reads TT. Lys211 bears the N6-carboxylysine mark. Residues Arg372, 396–399, Gly446, and Glu450 each bind meso-2,6-diaminopimelate; that span reads DNPR. A Meso-diaminopimelate recognition motif motif is present at residues 396–399; it reads DNPR.

This sequence belongs to the MurCDEF family. MurE subfamily. It depends on Mg(2+) as a cofactor. Post-translationally, carboxylation is probably crucial for Mg(2+) binding and, consequently, for the gamma-phosphate positioning of ATP.

The protein resides in the cytoplasm. The enzyme catalyses UDP-N-acetyl-alpha-D-muramoyl-L-alanyl-D-glutamate + meso-2,6-diaminopimelate + ATP = UDP-N-acetyl-alpha-D-muramoyl-L-alanyl-gamma-D-glutamyl-meso-2,6-diaminopimelate + ADP + phosphate + H(+). It participates in cell wall biogenesis; peptidoglycan biosynthesis. Catalyzes the addition of meso-diaminopimelic acid to the nucleotide precursor UDP-N-acetylmuramoyl-L-alanyl-D-glutamate (UMAG) in the biosynthesis of bacterial cell-wall peptidoglycan. The sequence is that of UDP-N-acetylmuramoyl-L-alanyl-D-glutamate--2,6-diaminopimelate ligase from Rickettsia rickettsii.